Consider the following 382-residue polypeptide: Lipid-A-disaccharide synthase (382 aa).

This sequence belongs to the LpxB family.

It carries out the reaction 2-N,3-O-bis[(3R)-3-hydroxytetradecanoyl]-alpha-D-glucosaminyl 1-phosphate + UDP-2-N,3-O-bis[(3R)-3-hydroxytetradecanoyl]-alpha-D-glucosamine = lipid A disaccharide (E. coli) + UDP + H(+). It catalyses the reaction a lipid X + a UDP-2-N,3-O-bis[(3R)-3-hydroxyacyl]-alpha-D-glucosamine = a lipid A disaccharide + UDP + H(+). The protein operates within glycolipid biosynthesis; lipid IV(A) biosynthesis; lipid IV(A) from (3R)-3-hydroxytetradecanoyl-[acyl-carrier-protein] and UDP-N-acetyl-alpha-D-glucosamine: step 5/6. Its function is as follows. Condensation of UDP-2,3-diacylglucosamine and 2,3-diacylglucosamine-1-phosphate to form lipid A disaccharide, a precursor of lipid A, a phosphorylated glycolipid that anchors the lipopolysaccharide to the outer membrane of the cell. The polypeptide is Lipid-A-disaccharide synthase (Salmonella paratyphi A (strain AKU_12601)).